The chain runs to 258 residues: Deoxyribose-phosphate aldolase (258 aa).

The active-site Proton donor/acceptor is the Asp102. The active-site Schiff-base intermediate with acetaldehyde is the Lys165. The active-site Proton donor/acceptor is Lys199.

It belongs to the DeoC/FbaB aldolase family. DeoC type 2 subfamily.

It is found in the cytoplasm. It carries out the reaction 2-deoxy-D-ribose 5-phosphate = D-glyceraldehyde 3-phosphate + acetaldehyde. The protein operates within carbohydrate degradation; 2-deoxy-D-ribose 1-phosphate degradation; D-glyceraldehyde 3-phosphate and acetaldehyde from 2-deoxy-alpha-D-ribose 1-phosphate: step 2/2. In terms of biological role, catalyzes a reversible aldol reaction between acetaldehyde and D-glyceraldehyde 3-phosphate to generate 2-deoxy-D-ribose 5-phosphate. The chain is Deoxyribose-phosphate aldolase from Vibrio parahaemolyticus serotype O3:K6 (strain RIMD 2210633).